Consider the following 128-residue polypeptide: Large ribosomal subunit protein bL17 (128 aa).

The protein belongs to the bacterial ribosomal protein bL17 family. As to quaternary structure, part of the 50S ribosomal subunit. Contacts protein L32.

This is Large ribosomal subunit protein bL17 from Edwardsiella ictaluri (strain 93-146).